A 672-amino-acid chain; its full sequence is Inner kinetochore subunit mis6 (672 aa).

This sequence belongs to the CENP-I/CTF3 family. As to quaternary structure, component of the inner kinetochore constitutive centromere-associated network (CCAN) (also known as central kinetochore Sim4 complex in fission yeast), which is composed of at least cnl2, cnp3, cnp20, fta1, fta2, fta3, fta4, fta6, fta7, mal2, mhf1, mhf2, mis6, mis15, mis17, sim4 and wip1. Interacts with cnp1, sim4, mis15 and mis17.

It localises to the nucleus. The protein localises to the chromosome. It is found in the centromere. Its function is as follows. Component of the kinetochore, a multiprotein complex that assembles on centromeric DNA and attaches chromosomes to spindle microtubules, mediating chromosome segregation and sister chromatid segregation during meiosis and mitosis. Component of the inner kinetochore constitutive centromere-associated network (CCAN), which serves as a structural platform for outer kinetochore assembly. Required for the localization of cnp1 to the centromere. The polypeptide is Inner kinetochore subunit mis6 (mis6) (Schizosaccharomyces pombe (strain 972 / ATCC 24843) (Fission yeast)).